Reading from the N-terminus, the 347-residue chain is UPF0284 protein M1425_0030 (347 aa).

This sequence belongs to the UPF0284 family.

This chain is UPF0284 protein M1425_0030, found in Saccharolobus islandicus (strain M.14.25 / Kamchatka #1) (Sulfolobus islandicus).